The sequence spans 732 residues: E3 ubiquitin-protein ligase RNF19B (732 aa).

Residues 1 to 109 form a disordered region; the sequence is MGSEKDSESP…PEEDEAAEGG (109 aa). The segment at 1–315 is required for ubiquitin ligase activity and for protection against staurosporin-induced cell death; sequence MGSEKDSESP…VCGCEFCWLC (315 aa). The segment covering 54–71 has biased composition (pro residues); sequence AEPPPPAAPPPPPPPAPA. The segment covering 72–99 has biased composition (low complexity); the sequence is PVEAQAPPVEALPSEPAAEAEAEAVAAG. Positions 100-109 are enriched in acidic residues; the sequence is PEEDEAAEGG. The segment at 112-334 is TRIAD supradomain; sequence EEVECPLCLV…LSPSGCTFWG (223 aa). 14 residues coordinate Zn(2+): Cys116, Cys119, Cys139, Cys142, Cys203, Cys208, Cys225, Cys230, Cys235, Cys238, His243, Cys248, Cys284, and Cys287. Residues 116–165 form an RING-type 1 zinc finger; sequence CPLCLVRLPPERAPRLLSCPHRSCRDCLRHYLRLEISESRVPISCPECSE. An IBR-type zinc finger spans residues 183 to 248; that stretch reads HKYEEFMLRR…KQIWHPNQTC (66 aa). An RING-type 2; atypical zinc finger spans residues 284–315; sequence CPRCSAYIIKMNDGSCNHMTCAVCGCEFCWLC. Cys299 is a catalytic residue. Residues Cys304, Cys307, Cys312, Cys315, His323, and Cys330 each coordinate Zn(2+). 2 consecutive transmembrane segments (helical) span residues 351–371 and 412–432; these read LIGA…AMVI and VIAA…VYGV. Disordered stretches follow at residues 598–644 and 660–732; these read QLVS…QSCE and QPES…YEVE. The span at 674–683 shows a compositional bias: acidic residues; it reads QSDDVPDITS.

The protein belongs to the RBR family. RNF19 subfamily. Interacts with UBE2L3, UBE2L6 and UCKL1. In terms of tissue distribution, expressed specifically in natural killer cells, activated macrophages and cytotoxic T-cells. Present in macrophages (at protein level). Ubiquitously expressed with high expression in testis.

Its subcellular location is the cytoplasmic granule membrane. The protein localises to the endoplasmic reticulum membrane. The catalysed reaction is [E2 ubiquitin-conjugating enzyme]-S-ubiquitinyl-L-cysteine + [acceptor protein]-L-lysine = [E2 ubiquitin-conjugating enzyme]-L-cysteine + [acceptor protein]-N(6)-ubiquitinyl-L-lysine.. It participates in protein modification; protein ubiquitination. In terms of biological role, E3 ubiquitin-protein ligase which accepts ubiquitin from E2 ubiquitin-conjugating enzymes UBE2L3 and UBE2L6 in the form of a thioester and then directly transfers the ubiquitin to targeted substrates, such as UCKL1. Involved in the cytolytic activity of natural killer cells and cytotoxic T-cells. Protects against staurosporin-induced cell death. The polypeptide is E3 ubiquitin-protein ligase RNF19B (Rnf19b) (Mus musculus (Mouse)).